We begin with the raw amino-acid sequence, 333 residues long: UPF0324 membrane protein WS2204 (333 aa).

9 consecutive transmembrane segments (helical) span residues 4-26 (SIRP…FGLA), 31-53 (FLSL…APWY), 59-81 (IGII…LFGF), 88-110 (LLGV…FTLG), 125-147 (SMLI…ESLS), 154-176 (TAIA…PLVY), 218-240 (VIVK…FTIL), 253-275 (PWFA…PSWL), and 310-332 (ALAL…VKLL).

Belongs to the UPF0324 family.

It is found in the cell membrane. This Wolinella succinogenes (strain ATCC 29543 / DSM 1740 / CCUG 13145 / JCM 31913 / LMG 7466 / NCTC 11488 / FDC 602W) (Vibrio succinogenes) protein is UPF0324 membrane protein WS2204.